The sequence spans 232 residues: Large ribosomal subunit protein uL1 (232 aa).

It belongs to the universal ribosomal protein uL1 family. As to quaternary structure, part of the 50S ribosomal subunit.

Its function is as follows. Binds directly to 23S rRNA. The L1 stalk is quite mobile in the ribosome, and is involved in E site tRNA release. Functionally, protein L1 is also a translational repressor protein, it controls the translation of the L11 operon by binding to its mRNA. This chain is Large ribosomal subunit protein uL1, found in Christiangramia forsetii (strain DSM 17595 / CGMCC 1.15422 / KT0803) (Gramella forsetii).